A 340-amino-acid polypeptide reads, in one-letter code: L-threonine 3-dehydrogenase (340 aa).

Cysteine 38 provides a ligand contact to Zn(2+). Catalysis depends on charge relay system residues threonine 40 and histidine 43. Residues histidine 63, glutamate 64, cysteine 93, cysteine 96, cysteine 99, and cysteine 107 each coordinate Zn(2+). Residues isoleucine 175, aspartate 195, arginine 200, 261–263 (LGI), and 285–286 (IY) each bind NAD(+).

Belongs to the zinc-containing alcohol dehydrogenase family. In terms of assembly, homotetramer. Zn(2+) is required as a cofactor.

It localises to the cytoplasm. It catalyses the reaction L-threonine + NAD(+) = (2S)-2-amino-3-oxobutanoate + NADH + H(+). The protein operates within amino-acid degradation; L-threonine degradation via oxydo-reductase pathway; glycine from L-threonine: step 1/2. Functionally, catalyzes the NAD(+)-dependent oxidation of L-threonine to 2-amino-3-ketobutyrate. The protein is L-threonine 3-dehydrogenase of Xanthomonas campestris pv. campestris (strain ATCC 33913 / DSM 3586 / NCPPB 528 / LMG 568 / P 25).